The primary structure comprises 126 residues: Ejaculatory bulb-specific protein 3 (126 aa).

The N-terminal stretch at 1–17 is a signal peptide; sequence MKMILALVVLGLVLVAA.

The protein belongs to the insect A10/OS-D protein family. In terms of tissue distribution, specifically expressed in the ejaculatory bulb and seminal fluid.

The protein resides in the secreted. In terms of biological role, protein component of the posterior mating plug. This Drosophila melanogaster (Fruit fly) protein is Ejaculatory bulb-specific protein 3.